The following is a 397-amino-acid chain: LL-diaminopimelate aminotransferase (397 aa).

Tyr-14 and Gly-41 together coordinate substrate. Residues Tyr-71, 104-105, Tyr-128, Asn-174, Tyr-205, and 233-235 each bind pyridoxal 5'-phosphate; these read AK and SFS. Residues Lys-105, Tyr-128, and Asn-174 each coordinate substrate. Residue Lys-236 is modified to N6-(pyridoxal phosphate)lysine. Residues Arg-244 and Asn-275 each contribute to the pyridoxal 5'-phosphate site. The substrate site is built by Asn-275 and Arg-368.

This sequence belongs to the class-I pyridoxal-phosphate-dependent aminotransferase family. LL-diaminopimelate aminotransferase subfamily. In terms of assembly, homodimer. Requires pyridoxal 5'-phosphate as cofactor.

It catalyses the reaction (2S,6S)-2,6-diaminopimelate + 2-oxoglutarate = (S)-2,3,4,5-tetrahydrodipicolinate + L-glutamate + H2O + H(+). It functions in the pathway amino-acid biosynthesis; L-lysine biosynthesis via DAP pathway; LL-2,6-diaminopimelate from (S)-tetrahydrodipicolinate (aminotransferase route): step 1/1. Its function is as follows. Involved in the synthesis of meso-diaminopimelate (m-DAP or DL-DAP), required for both lysine and peptidoglycan biosynthesis. Catalyzes the direct conversion of tetrahydrodipicolinate to LL-diaminopimelate. This Chlamydia pneumoniae (Chlamydophila pneumoniae) protein is LL-diaminopimelate aminotransferase.